The primary structure comprises 436 residues: 3-ketoacyl-CoA thiolase (436 aa).

The active-site Acyl-thioester intermediate is the Cys-99. Catalysis depends on proton acceptor residues His-392 and Cys-422.

This sequence belongs to the thiolase-like superfamily. Thiolase family. As to quaternary structure, heterotetramer of two alpha chains (FadJ) and two beta chains (FadI).

It is found in the cytoplasm. The enzyme catalyses an acyl-CoA + acetyl-CoA = a 3-oxoacyl-CoA + CoA. Its pathway is lipid metabolism; fatty acid beta-oxidation. Its function is as follows. Catalyzes the final step of fatty acid oxidation in which acetyl-CoA is released and the CoA ester of a fatty acid two carbons shorter is formed. The protein is 3-ketoacyl-CoA thiolase of Escherichia coli O6:H1 (strain CFT073 / ATCC 700928 / UPEC).